A 274-amino-acid polypeptide reads, in one-letter code: Rhamnulose-1-phosphate aldolase (274 aa).

Glutamate 117 is an active-site residue. Histidine 141, histidine 143, and histidine 212 together coordinate Zn(2+).

It belongs to the aldolase class II family. RhaD subfamily. As to quaternary structure, homotetramer. It depends on Zn(2+) as a cofactor.

The protein localises to the cytoplasm. The catalysed reaction is L-rhamnulose 1-phosphate = (S)-lactaldehyde + dihydroxyacetone phosphate. It functions in the pathway carbohydrate degradation; L-rhamnose degradation; glycerone phosphate from L-rhamnose: step 3/3. Its function is as follows. Catalyzes the reversible cleavage of L-rhamnulose-1-phosphate to dihydroxyacetone phosphate (DHAP) and L-lactaldehyde. The protein is Rhamnulose-1-phosphate aldolase of Escherichia coli O157:H7.